The following is a 638-amino-acid chain: Paramyosin (638 aa).

Residues 1 to 638 (FSPSTTRLES…EGDISVMQAD (638 aa)) are a coiled coil.

This sequence belongs to the paramyosin family. In terms of assembly, homodimer.

The protein resides in the cytoplasm. It is found in the myofibril. Functionally, paramyosin is a major structural component of many thick filaments isolated from invertebrate muscles. In Opisthorchis felineus, this protein is Paramyosin.